Reading from the N-terminus, the 249-residue chain is DNA polymerase sliding clamp (249 aa).

This sequence belongs to the PCNA family. As to quaternary structure, homotrimer. The subunits circularize to form a toroid; DNA passes through its center. Replication factor C (RFC) is required to load the toroid on the DNA.

Functionally, sliding clamp subunit that acts as a moving platform for DNA processing. Responsible for tethering the catalytic subunit of DNA polymerase and other proteins to DNA during high-speed replication. The chain is DNA polymerase sliding clamp from Thermococcus onnurineus (strain NA1).